Here is a 184-residue protein sequence, read N- to C-terminus: ATP-dependent protease subunit HslV (184 aa).

Residue Thr-12 is part of the active site. Gly-167, Cys-170, and Thr-173 together coordinate Na(+).

It belongs to the peptidase T1B family. HslV subfamily. In terms of assembly, a double ring-shaped homohexamer of HslV is capped on each side by a ring-shaped HslU homohexamer. The assembly of the HslU/HslV complex is dependent on binding of ATP.

The protein localises to the cytoplasm. The enzyme catalyses ATP-dependent cleavage of peptide bonds with broad specificity.. With respect to regulation, allosterically activated by HslU binding. Functionally, protease subunit of a proteasome-like degradation complex believed to be a general protein degrading machinery. This is ATP-dependent protease subunit HslV from Wolbachia sp. subsp. Drosophila simulans (strain wRi).